The chain runs to 469 residues: Phosphatidylinositol 4-kinase type 2-alpha (469 aa).

2 disordered regions span residues 1–30 (MDET…ATVP) and 50–72 (TATS…DQER). Over residues 16–25 (EYSYQSQCSP) the composition is skewed to polar residues. A compositionally biased stretch (low complexity) spans 50-60 (TATSCGSAASG). The region spanning 115 to 443 (DILPERISQG…VQTPPVIVET (329 aa)) is the PI3K/PI4K catalytic domain. The segment at 121–127 (ISQGSSG) is G-loop. ATP is bound by residues 122-128 (SQGSSGS) and K143. The tract at residues 148 to 150 (EPY) is important for substrate binding. The segment at 156–169 (KWTKWLQKLCCPCC) is important for interaction with membranes. Residues C165, C166, C168, and C169 are each lipidated (S-palmitoyl cysteine). Residue 252-255 (QIFV) coordinates ATP. The segment at 259–267 (KDADYWLRR) is important for interaction with membranes. Residues 296 to 304 (RNTDRGNDN) are catalytic loop. The tract at residues 334-354 (AIDNGLAFPLKHPDSWRAYPF) is activation loop. ATP is bound at residue D336. The tract at residues 349–358 (WRAYPFYWAW) is important for interaction with membranes.

It belongs to the PI3/PI4-kinase family. Type II PI4K subfamily.

Its subcellular location is the golgi apparatus. The protein resides in the trans-Golgi network membrane. The protein localises to the membrane raft. It localises to the endosome. It is found in the endosome membrane. Its subcellular location is the cytoplasmic vesicle. The protein resides in the cell projection. The protein localises to the dendrite. It localises to the presynaptic cell membrane. It is found in the synapse. Its subcellular location is the synaptosome. The protein resides in the mitochondrion. The protein localises to the membrane. It localises to the cell membrane. It is found in the perikaryon. Its subcellular location is the neuron projection. It catalyses the reaction a 1,2-diacyl-sn-glycero-3-phospho-(1D-myo-inositol) + ATP = a 1,2-diacyl-sn-glycero-3-phospho-(1D-myo-inositol 4-phosphate) + ADP + H(+). Membrane-bound phosphatidylinositol-4 kinase (PI4-kinase) that catalyzes the phosphorylation of phosphatidylinositol (PI) to phosphatidylinositol 4-phosphate (PI4P), a lipid that plays important roles in endocytosis, Golgi function, protein sorting and membrane trafficking. Besides, phosphorylation of phosphatidylinositol (PI) to phosphatidylinositol 4-phosphate (PI4P) is the first committed step in the generation of phosphatidylinositol 4,5-bisphosphate (PIP2), a precursor of the second messenger inositol 1,4,5-trisphosphate (InsP3). The polypeptide is Phosphatidylinositol 4-kinase type 2-alpha (pi4k2a) (Xenopus laevis (African clawed frog)).